The following is a 546-amino-acid chain: Capsid protein VP1 (546 aa).

Residues 1–38 (MMMASKDAPQSADGASGAGQLVPEVNTADPLPMEPVAG) form a disordered region. A shell domain region spans residues 1 to 226 (MMMASKDAPQ…FLFLVPPTIE (226 aa)). Positions 227–279 (QKTRAFTVPNIPLQTLSNSRFPSLIQGMILSPDASQVVQFQNGRCLIDGQLLG) are P1 sub-domain 1. The protruding domain stretch occupies residues 227–545 (QKTRAFTVPN…TARGRLGVRR (319 aa)). Residues 280–416 (TTPATSGQLF…GSSLSQAANL (137 aa)) form a P2 sub-domain region. Positions 417 to 546 (APPVFPPGFG…ARGRLGVRRI (130 aa)) are P1 sub-domain 2. Residues 538–545 (RGRLGVRR) are plays a role in binding to host histo-blood group structures antigens and in the formation of P-particles.

The protein belongs to the caliciviridae capsid protein family. In terms of assembly, homodimer. Homomultimer. Interacts with the minor capsid protein VP2. Interacts (via C-terminus) with host type I histo-blood group structures antigens at the surface of target cells. Post-translationally, may be cleaved by host protease to generate soluble capsid protein. Assembled capsid cannot be cleaved.

Its subcellular location is the virion. The protein localises to the host cytoplasm. In terms of biological role, capsid protein self assembles to form an icosahedral capsid with a T=3 symmetry, about 38 nm in diameter, and consisting of 180 capsid proteins. A smaller form of capsid with a diameter of 23 nm might be capsid proteins assembled as icosahedron with T=1 symmetry. The capsid encapsulates the genomic RNA and is decorated with VP2 proteins. Attaches virion to target cells by binding histo-blood group antigens (HBGAs) present on gastroduodenal epithelial cells. Its function is as follows. The soluble capsid protein may play a role in viral immunoevasion. This is Capsid protein VP1 from Southampton virus (strain GI/Human/United Kingdom/Southampton/1991) (SHV).